The primary structure comprises 278 residues: Acyl-[acyl-carrier-protein]--UDP-N-acetylglucosamine O-acyltransferase (278 aa).

The protein belongs to the transferase hexapeptide repeat family. LpxA subfamily. Homotrimer.

The protein localises to the cytoplasm. The catalysed reaction is a (3R)-hydroxyacyl-[ACP] + UDP-N-acetyl-alpha-D-glucosamine = a UDP-3-O-[(3R)-3-hydroxyacyl]-N-acetyl-alpha-D-glucosamine + holo-[ACP]. The protein operates within glycolipid biosynthesis; lipid IV(A) biosynthesis; lipid IV(A) from (3R)-3-hydroxytetradecanoyl-[acyl-carrier-protein] and UDP-N-acetyl-alpha-D-glucosamine: step 1/6. Functionally, involved in the biosynthesis of lipid A, a phosphorylated glycolipid that anchors the lipopolysaccharide to the outer membrane of the cell. The protein is Acyl-[acyl-carrier-protein]--UDP-N-acetylglucosamine O-acyltransferase of Brucella anthropi (strain ATCC 49188 / DSM 6882 / CCUG 24695 / JCM 21032 / LMG 3331 / NBRC 15819 / NCTC 12168 / Alc 37) (Ochrobactrum anthropi).